Reading from the N-terminus, the 380-residue chain is Septin homolog spn4 (380 aa).

A Septin-type G domain is found at 25–298; it reads NGVAFTLMLC…EQYRQEQMKV (274 aa). Positions 35-42 are G1 motif; the sequence is GESGLGKT. Residues 35–42, T70, G96, 175–183, G231, and R247 contribute to the GTP site; these read GESGLGKT and KADMYTRRD. Positions 93-96 are G3 motif; that stretch reads DTPG. A G4 motif region spans residues 174–177; the sequence is AKAD.

This sequence belongs to the TRAFAC class TrmE-Era-EngA-EngB-Septin-like GTPase superfamily. Septin GTPase family. As to quaternary structure, component of the septin complex composed of two copies of each spn1, spn2, spn3 and spn4.

Its subcellular location is the cytoplasm. The protein resides in the cell cortex. Its function is as follows. Plays a role in the cell cycle. Involved in a late stage of septum formation leading to the separation of the daughter cells. The polypeptide is Septin homolog spn4 (spn4) (Schizosaccharomyces pombe (strain 972 / ATCC 24843) (Fission yeast)).